Reading from the N-terminus, the 496-residue chain is Putative BTB/POZ domain and WD-repeat protein R61 (496 aa).

One can recognise a BTB domain in the interval 8–78; sequence SNINLILNDE…MFSDIDIYKN (71 aa). WD repeat units follow at residues 149–189, 208–248, 250–285, 291–330, 333–371, and 422–464; these read KFPR…FNSK, IFDN…KEFQ, DYKINDICFSPDGKSCVCANKFLSIYDLDNGRRKVL, KSIGCIKTCVCWTSDNIIACGDSDGVIEFWNAETNLIIKW, VSKSRISNISFSPDRSQIAVSNQTKIILYDSIFDKKILE, and MYFS…DIIY.

It belongs to the mimivirus BTB/WD family.

The protein is Putative BTB/POZ domain and WD-repeat protein R61 of Acanthamoeba polyphaga (Amoeba).